A 266-amino-acid chain; its full sequence is uncharacterized protein (266 aa).

The helical transmembrane segment at 12 to 28 threads the bilayer; it reads ILAAGLAIGCAGGYYAY. The FAD-binding FR-type domain maps to 40–140; it reads EIYAPFTVNK…RGPFKTTKLD (101 aa).

It belongs to the flavoprotein pyridine nucleotide cytochrome reductase family. FAD is required as a cofactor.

It localises to the mitochondrion outer membrane. This is an uncharacterized protein from Schizosaccharomyces pombe (strain 972 / ATCC 24843) (Fission yeast).